Here is a 152-residue protein sequence, read N- to C-terminus: Protein NrdI (152 aa).

The protein belongs to the NrdI family.

In terms of biological role, probably involved in ribonucleotide reductase function. The sequence is that of Protein NrdI from Mycolicibacterium vanbaalenii (strain DSM 7251 / JCM 13017 / BCRC 16820 / KCTC 9966 / NRRL B-24157 / PYR-1) (Mycobacterium vanbaalenii).